We begin with the raw amino-acid sequence, 274 residues long: MQQLQNIIETAFERRAEITPANADTVTREAVNQVIALLDSGALRVAEKIDGQWVTHQWLKKAVLLSFRINDNQVIEGAESRYFDKVPMKFANYDEARFQKEGFRVVPPAAVRQGAFIARNTVLMPSYVNIGAYVDEGTMVDTWATVGSCAQIGKNVHLSGGVGIGGVLEPLQANPTIIEDNCFIGARSEVVEGVIVEEGSVISMGVYIGQSTRIYDRETGEIHYGRVPAGSVVVSGNLPSKDGKYSLYCAVIVKKVDAKTRGKVGINELLRTID.

Arg-104 and Asp-141 together coordinate substrate.

This sequence belongs to the transferase hexapeptide repeat family. Homotrimer.

It localises to the cytoplasm. The catalysed reaction is (S)-2,3,4,5-tetrahydrodipicolinate + succinyl-CoA + H2O = (S)-2-succinylamino-6-oxoheptanedioate + CoA. The protein operates within amino-acid biosynthesis; L-lysine biosynthesis via DAP pathway; LL-2,6-diaminopimelate from (S)-tetrahydrodipicolinate (succinylase route): step 1/3. The polypeptide is 2,3,4,5-tetrahydropyridine-2,6-dicarboxylate N-succinyltransferase (Escherichia coli O127:H6 (strain E2348/69 / EPEC)).